We begin with the raw amino-acid sequence, 117 residues long: Movement and RNA silencing protein (117 aa).

The helical transmembrane segment at 15 to 35 threads the bilayer; the sequence is FLFFGAIFIAITILYILLVLL. The interval 83 to 117 is disordered; that stretch reads RDQEPAVIPHVSQVIPSQPNRRDDQGRRGNAGPMF.

The protein localises to the host cell membrane. Functionally, transports viral genome to neighboring plant cells directly through plasmosdesmata, without any budding. The movement protein allows efficient cell to cell propagation, by bypassing the host cell wall barrier. Begomovirus genome is shuttled out of nucleus by Nuclear shuttle protein (NSP) and the movement protein transports the DNA-NSP complex to cell plasmodesmata and facilitates further movement across the cell wall. Acts as a suppressor of RNA-mediated gene silencing, also known as post-transcriptional gene silencing (PTGS), a mechanism of plant viral defense that limits the accumulation of viral RNAs. In Banana bunchy top virus (isolate Autralia) (BBTV), this protein is Movement and RNA silencing protein (DNA-M).